The following is a 103-amino-acid chain: MYAVIVTGGKQHKVTEGEFLKVEKLDVATGEAIDFDRVLLVANGEDVKIGLPVVEGAKVTAEVVSHGRHDKVRIIKFRRRKHHMKRQGHRQWFTEIKITGIQA.

This sequence belongs to the bacterial ribosomal protein bL21 family. Part of the 50S ribosomal subunit. Contacts protein L20.

Functionally, this protein binds to 23S rRNA in the presence of protein L20. This is Large ribosomal subunit protein bL21 from Pseudomonas aeruginosa (strain LESB58).